We begin with the raw amino-acid sequence, 877 residues long: Alanine--tRNA ligase (877 aa).

4 residues coordinate Zn(2+): His-564, His-568, Cys-666, and His-670.

It belongs to the class-II aminoacyl-tRNA synthetase family. Zn(2+) serves as cofactor.

The protein resides in the cytoplasm. The catalysed reaction is tRNA(Ala) + L-alanine + ATP = L-alanyl-tRNA(Ala) + AMP + diphosphate. Functionally, catalyzes the attachment of alanine to tRNA(Ala) in a two-step reaction: alanine is first activated by ATP to form Ala-AMP and then transferred to the acceptor end of tRNA(Ala). Also edits incorrectly charged Ser-tRNA(Ala) and Gly-tRNA(Ala) via its editing domain. This chain is Alanine--tRNA ligase, found in Pelotomaculum thermopropionicum (strain DSM 13744 / JCM 10971 / SI).